The primary structure comprises 564 residues: MRLSEFHLHTTKEIPADAELVSHRLMLRAGMIRKLASGLYTWSPLGLRVLRKVEAIVRDEMNRAGAVEMLLPTIQPRELWEESERWEKFGSQLLKIKDRKQAEYCYSPTAEEAVTDYVRQELTSYKQLPVNLYQIQTKFRDEIRPRFGVMRAREFVMKDAYSFHLNDADLVREYENMRATYTRIFTRLGLEFRAVQADSGAIGGDASQEFHVIADSGEDVLAFSTGSDYAANIEAAIAATPGPRLTANETLQKVSTPTQKRCEDVAALLDIPLQRVVKSIAVMTDSGFFLALLRGDHTLNDIKLSKLPGLANFRLANEVEIARHLGSEPGFLGPVCPGMPIRIIADCEVAVMADFVVGANEVGFHLVGVNWGRDLPEPEVVADIRNVIEGDRAVDGGKICIARGIEVGHVFQLGRKYAEAMKATVLDEYGKAVTMTMGCYGIGVSRIVAAAIEQNHDVAGIIWPAPIAPWQVAVCVINPKKDPVITAAAEMLLAELQSADVDTVLDDRGLRPGVMFADMELIGIPHRIVVSERGLAAGTYEYRARRTAMVENLDKTTLLTRIKA.

This sequence belongs to the class-II aminoacyl-tRNA synthetase family. ProS type 1 subfamily. Homodimer.

The protein localises to the cytoplasm. It catalyses the reaction tRNA(Pro) + L-proline + ATP = L-prolyl-tRNA(Pro) + AMP + diphosphate. Its function is as follows. Catalyzes the attachment of proline to tRNA(Pro) in a two-step reaction: proline is first activated by ATP to form Pro-AMP and then transferred to the acceptor end of tRNA(Pro). As ProRS can inadvertently accommodate and process non-cognate amino acids such as alanine and cysteine, to avoid such errors it has two additional distinct editing activities against alanine. One activity is designated as 'pretransfer' editing and involves the tRNA(Pro)-independent hydrolysis of activated Ala-AMP. The other activity is designated 'posttransfer' editing and involves deacylation of mischarged Ala-tRNA(Pro). The misacylated Cys-tRNA(Pro) is not edited by ProRS. This chain is Proline--tRNA ligase, found in Xylella fastidiosa (strain Temecula1 / ATCC 700964).